The sequence spans 132 residues: Small ribosomal subunit protein uS8 (132 aa).

It belongs to the universal ribosomal protein uS8 family. As to quaternary structure, part of the 30S ribosomal subunit. Contacts proteins S5 and S12.

One of the primary rRNA binding proteins, it binds directly to 16S rRNA central domain where it helps coordinate assembly of the platform of the 30S subunit. This chain is Small ribosomal subunit protein uS8, found in Lactobacillus helveticus (strain DPC 4571).